The primary structure comprises 947 residues: Protocadherin alpha-4 (947 aa).

The first 29 residues, 1–29, serve as a signal peptide directing secretion; sequence MEFSWGSGQESRRLLLLLLLLSAWEAGNG. Cadherin domains are found at residues 30–133, 134–242, 243–350, 351–455, 456–565, and 588–678; these read QLHY…PPVF, PATQ…APAF, DRTI…VPDL, EFKS…APAF, AQPE…APAL, and DHVV…APKA. Over 30–697 the chain is Extracellular; it reads QLHYSVSEEA…GPDAALVDVN (668 aa). Cys-96 and Cys-102 are disulfide-bonded. 3 N-linked (GlcNAc...) asparagine glycosylation sites follow: Asn-139, Asn-257, and Asn-265. Residue Asn-548 is glycosylated (N-linked (GlcNAc...) asparagine). A helical transmembrane segment spans residues 698–718; sequence VYLIIAICAVSSLLVLTLLLY. The Cytoplasmic portion of the chain corresponds to 719-947; that stretch reads TALRCSAPPT…GNSTTDNSDQ (229 aa). PXXP repeat units follow at residues 734 to 737, 774 to 777, 796 to 799, 829 to 832, 870 to 873, and 888 to 891; these read PGKP, PSLP, PRQP, PGGP, PGNP, and PGSP. The tract at residues 734-891 is 6 X 4 AA repeats of P-X-X-P; it reads PGKPTLVCSS…PDKFIIPGSP (158 aa). Positions 738-947 are required for interaction with FYN; the sequence is TLVCSSAVGS…GNSTTDNSDQ (210 aa). 2 disordered regions span residues 754–805 and 828–853; these read RRPR…DWRY and GPGG…EVSP. The tract at residues 892–947 is disordered; it reads AIISIRQEPANSQIDKSDFITFGKKEETKKKKKKKKGNKTQEKKEKGNSTTDNSDQ. Residues 906 to 920 show a composition bias toward basic and acidic residues; the sequence is DKSDFITFGKKEETK.

In terms of assembly, forms homodimers in trans (molecules expressed by two different cells). Forms promiscuous heterodimers in cis (at the plasma membrane of the same cell) with other protocadherins. Interacts with FYN.

It localises to the cell membrane. Functionally, calcium-dependent cell-adhesion protein involved in cells self-recognition and non-self discrimination. Thereby, it is involved in the establishment and maintenance of specific neuronal connections in the brain. In Pan troglodytes (Chimpanzee), this protein is Protocadherin alpha-4.